Here is a 68-residue protein sequence, read N- to C-terminus: uncharacterized protein (68 aa).

The first 21 residues, 1 to 21 (MELYREYPAWLIFLRRTYAVA), serve as a signal peptide directing secretion.

This is an uncharacterized protein from Escherichia coli O157:H7.